We begin with the raw amino-acid sequence, 344 residues long: Prickle-like protein 4 (344 aa).

Residues 1–81 (MSPQGPAVLS…ARLVLPKLEG (81 aa)) enclose the PET domain. 2 LIM zinc-binding domains span residues 82–147 (HTCE…LLRP) and 148–207 (RCPA…RYSD). The disordered stretch occupies residues 253–344 (GSSLQTQRGL…NASKTHCTMC (92 aa)). Positions 257-271 (QTQRGLPGSSPQQEN) are enriched in polar residues. Positions 272 to 296 (RPGDKAEAPKGQEQCRLETIRDPKD) are enriched in basic and acidic residues. Residues 322–344 (SWKTPGSLQAEDSNASKTHCTMC) show a composition bias toward polar residues.

Belongs to the prickle / espinas / testin family. As to expression, expressed in a broad range of normal tissues as well as in hepatocellular carcinoma, breast cancer and prostate cancer tissues.

In Homo sapiens (Human), this protein is Prickle-like protein 4 (PRICKLE4).